A 212-amino-acid polypeptide reads, in one-letter code: MNLLIMGLPGAGKGTQAAKIVEEFGVAHISTGDMFRAAMANQTEMGRLAKSYIDKGELVPDEVTNGIVKERLAEDDIAEKGFLLDGYPRTIEQAHALDATLEELGLRLDGVINIKVDPSCLIERLSGRIINRKTGETFHKVFNPPVDYKEEDYYQREDDKPETVKRRLDVNIAQGESILEHYRKLGLVTDIEGNQEITEVFADVEKALLELK.

Position 10–15 (10–15 (GAGKGT)) interacts with ATP. The NMP stretch occupies residues 30–59 (STGDMFRAAMANQTEMGRLAKSYIDKGELV). AMP-binding positions include Thr31, Arg36, 57 to 59 (ELV), 86 to 89 (GYPR), and Gln93. The tract at residues 127 to 159 (GRIINRKTGETFHKVFNPPVDYKEEDYYQREDD) is LID. ATP-binding positions include Arg128 and 137–138 (TF). 2 residues coordinate AMP: Arg156 and Arg167. Residue Gln195 participates in ATP binding.

This sequence belongs to the adenylate kinase family. Monomer.

The protein resides in the cytoplasm. It catalyses the reaction AMP + ATP = 2 ADP. Its pathway is purine metabolism; AMP biosynthesis via salvage pathway; AMP from ADP: step 1/1. Catalyzes the reversible transfer of the terminal phosphate group between ATP and AMP. Plays an important role in cellular energy homeostasis and in adenine nucleotide metabolism. This is Adenylate kinase from Streptococcus agalactiae serotype Ia (strain ATCC 27591 / A909 / CDC SS700).